Here is a 294-residue protein sequence, read N- to C-terminus: NADH-cytochrome b5 reductase 1 (294 aa).

The chain crosses the membrane as a helical span at residues 13–33 (PHASFLGGLVVAAILGLFIFF). One can recognise an FAD-binding FR-type domain in the interval 44 to 147 (VEWRSFKLVD…KGPKGKFVYT (104 aa)). Residues 127–142 (SLLT…GPKG) and 153–185 (HLVM…RLSL) each bind FAD.

It belongs to the flavoprotein pyridine nucleotide cytochrome reductase family. Monomer. Component of the 2-(3-amino-3-carboxypropyl)histidine synthase complex composed of DPH1, DPH2, DPH3 and a NADH-dependent reductase, predominantly CBR1. It depends on FAD as a cofactor.

It localises to the mitochondrion outer membrane. It carries out the reaction 2 Fe(III)-[cytochrome b5] + NADH = 2 Fe(II)-[cytochrome b5] + NAD(+) + H(+). The enzyme catalyses 2 Fe(3+)-[Dph3] + NADH = 2 Fe(2+)-[Dph3] + NAD(+) + H(+). Its pathway is protein modification; peptidyl-diphthamide biosynthesis. NADH-dependent reductase for DPH3 and cytochrome b5. Required for the first step of diphthamide biosynthesis, a post-translational modification of histidine which occurs in elongation factor 2. DPH1 and DPH2 transfer a 3-amino-3-carboxypropyl (ACP) group from S-adenosyl-L-methionine (SAM) to a histidine residue, the reaction is assisted by a reduction system comprising DPH3 and a NADH-dependent reductase, predominantly CBR1. By reducing DPH3, also involved in the formation of the tRNA wobble base modification mcm5s 2U (5-methoxycarbonylmethyl-2-thiouridine), mediated by the elongator complex. The cytochrome b5/NADH cytochrome b5 reductase electron transfer system supports the catalytic activity of several sterol biosynthetic enzymes. This Cryptococcus neoformans var. neoformans serotype D (strain B-3501A) (Filobasidiella neoformans) protein is NADH-cytochrome b5 reductase 1 (CBR1).